Here is a 312-residue protein sequence, read N- to C-terminus: Lipoyl synthase (312 aa).

Over residues Met1 to Lys10 the composition is skewed to basic and acidic residues. Residues Met1 to Arg20 form a disordered region. The [4Fe-4S] cluster site is built by Cys51, Cys56, Cys62, Cys77, Cys81, Cys84, and Ser290. Residues Trp63–Phe280 enclose the Radical SAM core domain.

The protein belongs to the radical SAM superfamily. Lipoyl synthase family. The cofactor is [4Fe-4S] cluster.

The protein localises to the cytoplasm. It carries out the reaction [[Fe-S] cluster scaffold protein carrying a second [4Fe-4S](2+) cluster] + N(6)-octanoyl-L-lysyl-[protein] + 2 oxidized [2Fe-2S]-[ferredoxin] + 2 S-adenosyl-L-methionine + 4 H(+) = [[Fe-S] cluster scaffold protein] + N(6)-[(R)-dihydrolipoyl]-L-lysyl-[protein] + 4 Fe(3+) + 2 hydrogen sulfide + 2 5'-deoxyadenosine + 2 L-methionine + 2 reduced [2Fe-2S]-[ferredoxin]. It participates in protein modification; protein lipoylation via endogenous pathway; protein N(6)-(lipoyl)lysine from octanoyl-[acyl-carrier-protein]: step 2/2. Functionally, catalyzes the radical-mediated insertion of two sulfur atoms into the C-6 and C-8 positions of the octanoyl moiety bound to the lipoyl domains of lipoate-dependent enzymes, thereby converting the octanoylated domains into lipoylated derivatives. The polypeptide is Lipoyl synthase (Chlamydia felis (strain Fe/C-56) (Chlamydophila felis)).